Consider the following 560-residue polypeptide: Choline/ethanolamine transporter FLVCR1 (560 aa).

Residues Met1–Glu43 are disordered. Residues Met1–Pro92 lie on the Cytoplasmic side of the membrane. The helical transmembrane segment at Arg93–Gln117 threads the bilayer. Residues Trp118–Ser135 lie on the Extracellular side of the membrane. A helical transmembrane segment spans residues Pro136–Thr163. The Cytoplasmic segment spans residues Arg164 to Gly165. A helical transmembrane segment spans residues Leu166–Cys185. Residues Gly186–Leu192 are Extracellular-facing. A helical transmembrane segment spans residues Phe193 to Trp221. Gln207 contributes to the ethanolamine binding site. Residues Phe222–Glu226 lie on the Cytoplasmic side of the membrane. Residues Val227–Leu252 traverse the membrane as a helical segment. Residues Val253–Asn270 lie on the Extracellular side of the membrane. Asn270 carries an N-linked (GlcNAc...) asparagine glycan. Residues Asn271–Ala300 form a helical membrane-spanning segment. Topologically, residues Phe301 to Asn336 are cytoplasmic. The helical transmembrane segment at Ile337–Tyr367 threads the bilayer. Over Tyr368 to Glu371 the chain is Extracellular. The helical transmembrane segment at Glu372–Thr400 threads the bilayer. Residues Lys401–Thr402 are Cytoplasmic-facing. A helical membrane pass occupies residues Tyr403–Leu425. The Extracellular portion of the chain corresponds to Asn426–Gly428. Residues Tyr429 to Ile458 form a helical membrane-spanning segment. The Cytoplasmic segment spans residues Thr459–Met466. The chain crosses the membrane as a helical span at residues Ser467–Asp492. Residue Gln476 coordinates ethanolamine. A choline-binding site is contributed by Gln476. Residues Tyr493 to Ser495 are Extracellular-facing. A helical transmembrane segment spans residues Pro496–Lys518. Over Ser519–Leu560 the chain is Cytoplasmic. Residue Ser542 is modified to Phosphoserine.

This sequence belongs to the major facilitator superfamily. Feline leukemia virus subgroup C receptor (TC 2.A.1.28.1) family.

It localises to the cell membrane. It carries out the reaction choline(out) = choline(in). The enzyme catalyses ethanolamine(in) = ethanolamine(out). It catalyses the reaction heme b(in) = heme b(out). In terms of biological role, uniporter that mediates the transport of extracellular choline and ethanolamine into cells, thereby playing a key role in phospholipid biosynthesis. Choline and ethanolamine are the precursors of phosphatidylcholine and phosphatidylethanolamine, respectively, the two most abundant phospholipids. Transport is not coupled with proton transport and is exclusively driven by the choline (or ethanolamine) gradient across the plasma membrane. Also acts as a heme b transporter that mediates heme efflux from the cytoplasm to the extracellular compartment. This chain is Choline/ethanolamine transporter FLVCR1 (Flvcr1), found in Mus terricolor (Earth-colored mouse).